A 400-amino-acid chain; its full sequence is MTAREFLEATEKEKLAPYATRSADSAGRTLHGDEPDDYRTCFQRDRDRILYSKVFKDLQHKTQVFLINEGDFYRTRLTHTLEVAQHARTFARALRLNEDLCEAIAYAHDLGHPPFGHSGEETLNDLLKDDGGFEHNIQSLRVVDFLEKRYQRYDGLNLCFETREGIARHNTTHDHPDTPPEFQNYSQASLEAQVVNIADPLAYCAHDLEDALNAGYLRMKDLRNMENPLVRRVFERCSSRYPDFLKADTVLQSRILVRTLIEEANIAVIRQTSRNIELYGISSVEEARSLPEDVVAAPAGVWKNFDALKAYLFENVYRKPQVCIMNEKGKLIIRRIFHHLEKRPEMLPGIFKTRFDEAADSSGKRRVLADYISGMTDRYVMDLYMMMFEPYEKVMFEFRE.

The 129-residue stretch at 76–204 (RLTHTLEVAQ…VNIADPLAYC (129 aa)) folds into the HD domain.

Belongs to the dGTPase family. Type 2 subfamily.

In Syntrophus aciditrophicus (strain SB), this protein is Deoxyguanosinetriphosphate triphosphohydrolase-like protein.